The primary structure comprises 346 residues: Glycosyltransferase 1 domain-containing protein 1 (346 aa).

An N-terminal signal peptide occupies residues 1–16 (MRLLFLAVLRPHTGNA).

Belongs to the glycosyltransferase group 1 family. Glycosyltransferase 4 subfamily.

Its subcellular location is the secreted. This is Glycosyltransferase 1 domain-containing protein 1 (GLT1D1) from Homo sapiens (Human).